Reading from the N-terminus, the 808-residue chain is Sucrose synthase (808 aa).

The tract at residues 271–753 (MLFRIALISP…GIERVYSTYT (483 aa)) is GT-B glycosyltransferase.

This sequence belongs to the glycosyltransferase 1 family. Probably a homotetramer.

It carries out the reaction an NDP-alpha-D-glucose + D-fructose = a ribonucleoside 5'-diphosphate + sucrose + H(+). The catalysed reaction is ADP-alpha-D-glucose + D-fructose = sucrose + ADP + H(+). Catalyzes the reversible conversion of sucrose and a nucleotide disphosphate (NDP) into fructose and NDP-glucose; although the reaction is freely reversible in vitro, the physiological reaction seems to be sucrose cleavage. Unlike characterized plant enzymes prefers ADP as a cosubstrate, whereas plants prefer UDP. Its preference for ADP over UDP suggests it may directly link sucrose and glycogen metabolism. The polypeptide is Sucrose synthase (Thermosynechococcus vestitus (strain NIES-2133 / IAM M-273 / BP-1)).